Here is a 336-residue protein sequence, read N- to C-terminus: 3-isopropylmalate dehydrogenase (336 aa).

Residues arginine 87, arginine 97, arginine 121, and aspartate 211 each contribute to the substrate site. Residues aspartate 211, aspartate 235, and aspartate 239 each contribute to the Mg(2+) site. 271–283 (GSAPDIAGQGIAD) is a binding site for NAD(+).

It belongs to the isocitrate and isopropylmalate dehydrogenases family. LeuB type 2 subfamily. Homodimer. Mg(2+) is required as a cofactor. It depends on Mn(2+) as a cofactor.

The protein localises to the cytoplasm. It catalyses the reaction (2R,3S)-3-isopropylmalate + NAD(+) = 4-methyl-2-oxopentanoate + CO2 + NADH. Its pathway is amino-acid biosynthesis; L-leucine biosynthesis; L-leucine from 3-methyl-2-oxobutanoate: step 3/4. Its function is as follows. Catalyzes the oxidation of 3-carboxy-2-hydroxy-4-methylpentanoate (3-isopropylmalate) to 3-carboxy-4-methyl-2-oxopentanoate. The product decarboxylates to 4-methyl-2 oxopentanoate. The polypeptide is 3-isopropylmalate dehydrogenase (Rhodococcus jostii (strain RHA1)).